Here is a 323-residue protein sequence, read N- to C-terminus: G patch domain-containing protein 4 (323 aa).

4 disordered regions span residues 1 to 32, 84 to 110, 124 to 185, and 197 to 323; these read MSAS…GLGR, GVKV…SNRN, PGGE…SAKL, and AKYG…NKSE. Basic and acidic residues-rich tracts occupy residues 9 to 32 and 84 to 94; these read SQGR…GLGR and GVKVNRTKDDD. The 47-residue stretch at 11–57 folds into the G-patch domain; the sequence is GRRFAEQQMHKHGWTEGKGLGRRENGISEAIKVKVKCDHAGVGHNSA. The span at 131–141 shows a compositional bias: low complexity; that stretch reads KEPSSSESSDS. Residues 252 to 261 are compositionally biased toward acidic residues; that stretch reads EREEEEEEES. Basic residues predominate over residues 281 to 291; sequence SKKKKSKKKHR. Positions 294-306 are enriched in polar residues; that stretch reads SASPQEEQVTEST. The segment covering 311–323 has biased composition (basic residues); the sequence is KPKKKKKKKNKSE.

This Xenopus tropicalis (Western clawed frog) protein is G patch domain-containing protein 4 (gpatch4).